The primary structure comprises 401 residues: Enoyl-[acyl-carrier-protein] reductase [NADH] (401 aa).

Residues 48-53 (GASSGY), 74-75 (FE), 111-112 (DA), and 140-141 (LA) each bind NAD(+). Tyr-226 is a binding site for substrate. The active-site Proton donor is Tyr-236. NAD(+) is bound by residues Lys-245 and 274 to 276 (VVT).

This sequence belongs to the TER reductase family. As to quaternary structure, monomer.

It catalyses the reaction a 2,3-saturated acyl-[ACP] + NAD(+) = a (2E)-enoyl-[ACP] + NADH + H(+). The protein operates within lipid metabolism; fatty acid biosynthesis. Involved in the final reduction of the elongation cycle of fatty acid synthesis (FAS II). Catalyzes the reduction of a carbon-carbon double bond in an enoyl moiety that is covalently linked to an acyl carrier protein (ACP). This Xylella fastidiosa (strain Temecula1 / ATCC 700964) protein is Enoyl-[acyl-carrier-protein] reductase [NADH].